The chain runs to 319 residues: Ribose-phosphate pyrophosphokinase (319 aa).

ATP is bound by residues 40 to 42 (DGE) and 99 to 100 (RQ). Mg(2+) contacts are provided by H134 and D174. Residue K198 is part of the active site. Residues R200, D224, and 228–232 (DTAGT) contribute to the D-ribose 5-phosphate site.

This sequence belongs to the ribose-phosphate pyrophosphokinase family. Class I subfamily. As to quaternary structure, homohexamer. The cofactor is Mg(2+).

Its subcellular location is the cytoplasm. It catalyses the reaction D-ribose 5-phosphate + ATP = 5-phospho-alpha-D-ribose 1-diphosphate + AMP + H(+). It participates in metabolic intermediate biosynthesis; 5-phospho-alpha-D-ribose 1-diphosphate biosynthesis; 5-phospho-alpha-D-ribose 1-diphosphate from D-ribose 5-phosphate (route I): step 1/1. Its function is as follows. Involved in the biosynthesis of the central metabolite phospho-alpha-D-ribosyl-1-pyrophosphate (PRPP) via the transfer of pyrophosphoryl group from ATP to 1-hydroxyl of ribose-5-phosphate (Rib-5-P). In Xanthomonas campestris pv. campestris (strain ATCC 33913 / DSM 3586 / NCPPB 528 / LMG 568 / P 25), this protein is Ribose-phosphate pyrophosphokinase.